The primary structure comprises 353 residues: Rhodopsin (353 aa).

The Extracellular segment spans residues 1–36 (MNGTEGPYFYIPMVNTTGIVRSPYEYPQYYLVNPAA). Residues Asn2 and Asn15 are each glycosylated (N-linked (GlcNAc...) asparagine). Residues 37 to 61 (YAALGAYMFLLILVGFPINFLTLYV) traverse the membrane as a helical segment. The Cytoplasmic portion of the chain corresponds to 62 to 73 (TIEHKKLRTPLN). A helical transmembrane segment spans residues 74–96 (YILLNLAVANLFMVFGGFTTTMY). Over 97–110 (TSMHGYFVLGRLGC) the chain is Extracellular. The cysteines at positions 110 and 187 are disulfide-linked. The helical transmembrane segment at 111 to 133 (NLEGFFATLGGEIALWSLVVLAI) threads the bilayer. A 'Ionic lock' involved in activated form stabilization motif is present at residues 134-136 (ERW). The Cytoplasmic portion of the chain corresponds to 134–152 (ERWMVVCKPISNFRFGEDH). A helical membrane pass occupies residues 153 to 173 (AIMGLAFTWVMAAACAVPPLV). The Extracellular segment spans residues 174–202 (GWSRYIPEGMQCSCGIDYYTRAEGFNNES). Asn200 carries N-linked (GlcNAc...) asparagine glycosylation. A helical transmembrane segment spans residues 203 to 224 (FVIYMFVCHFLIPLVVVFFCYG). At 225–252 (RLLCAVKEAAAAQQESETTQRAEREVSR) the chain is on the cytoplasmic side. Residues 253–274 (MVVIMVVAFLICWCPYAGVAWY) traverse the membrane as a helical segment. Topologically, residues 275–286 (IFTHQGSEFGPL) are extracellular. The helical transmembrane segment at 287–308 (FMTFPAFFAKSSSIYNPMIYIC) threads the bilayer. Lys296 carries the N6-(retinylidene)lysine modification. Topologically, residues 309-353 (MNKQFRHCMITTLCCGKNPFEEEEGASTTSKTEASSVSSSSVSPA) are cytoplasmic. S-palmitoyl cysteine attachment occurs at residues Cys322 and Cys323. The tract at residues 330-353 (EEEGASTTSKTEASSVSSSSVSPA) is disordered. Positions 334-353 (ASTTSKTEASSVSSSSVSPA) are enriched in low complexity.

The protein belongs to the G-protein coupled receptor 1 family. Opsin subfamily. Phosphorylated on some or all of the serine and threonine residues present in the C-terminal region. Post-translationally, contains one covalently linked retinal chromophore.

It localises to the membrane. It is found in the cell projection. Its subcellular location is the cilium. The protein localises to the photoreceptor outer segment. Functionally, photoreceptor required for image-forming vision at low light intensity. While most salt water fish species use retinal as chromophore, most freshwater fish use 3-dehydroretinal, or a mixture of retinal and 3-dehydroretinal. Light-induced isomerization of 11-cis to all-trans retinal triggers a conformational change that activates signaling via G-proteins. Subsequent receptor phosphorylation mediates displacement of the bound G-protein alpha subunit by arrestin and terminates signaling. The sequence is that of Rhodopsin (rho) from Chelon saliens (Leaping mullet).